A 435-amino-acid chain; its full sequence is tRNA-2-methylthio-N(6)-dimethylallyladenosine synthase (435 aa).

The 116-residue stretch at 2–117 (KKASIITYGC…IPQAIEKIEN (116 aa)) folds into the MTTase N-terminal domain. The [4Fe-4S] cluster site is built by Cys-11, Cys-47, Cys-80, Cys-154, Cys-158, and Cys-161. In terms of domain architecture, Radical SAM core spans 140–370 (FGSDQTASIS…MEVQNKCSFY (231 aa)). In terms of domain architecture, TRAM spans 373–435 (SKYKGRIVKV…KTWTLYGEIV (63 aa)).

Belongs to the methylthiotransferase family. MiaB subfamily. Monomer. [4Fe-4S] cluster serves as cofactor.

The protein localises to the cytoplasm. It carries out the reaction N(6)-dimethylallyladenosine(37) in tRNA + (sulfur carrier)-SH + AH2 + 2 S-adenosyl-L-methionine = 2-methylsulfanyl-N(6)-dimethylallyladenosine(37) in tRNA + (sulfur carrier)-H + 5'-deoxyadenosine + L-methionine + A + S-adenosyl-L-homocysteine + 2 H(+). Its function is as follows. Catalyzes the methylthiolation of N6-(dimethylallyl)adenosine (i(6)A), leading to the formation of 2-methylthio-N6-(dimethylallyl)adenosine (ms(2)i(6)A) at position 37 in tRNAs that read codons beginning with uridine. The sequence is that of tRNA-2-methylthio-N(6)-dimethylallyladenosine synthase from Fusobacterium nucleatum subsp. nucleatum (strain ATCC 25586 / DSM 15643 / BCRC 10681 / CIP 101130 / JCM 8532 / KCTC 2640 / LMG 13131 / VPI 4355).